Here is a 376-residue protein sequence, read N- to C-terminus: Growth/differentiation factor 8 (376 aa).

The N-terminal stretch at 1 to 24 (MIQKPQMYVYIYLFVLIAAGPVDL) is a signal peptide. Positions 25 to 267 (NEDSEREANV…VTDTPKRSRR (243 aa)) are excised as a propeptide. N-linked (GlcNAc...) asparagine glycosylation occurs at Asn72. Disulfide bonds link Cys273/Cys283, Cys282/Cys341, Cys310/Cys373, and Cys314/Cys375.

The protein belongs to the TGF-beta family. As to quaternary structure, homodimer; disulfide-linked. Interacts with WFIKKN2, leading to inhibit its activity. Interacts with FSTL3. In terms of processing, synthesized as large precursor molecule that undergoes proteolytic cleavage to generate an N-terminal propeptide and a disulfide linked C-terminal dimer, which is the biologically active molecule. The circulating form consists of a latent complex of the C-terminal dimer and other proteins, including its propeptide, which maintain the C-terminal dimer in a latent, inactive state. Ligand activation requires additional cleavage of the prodomain by a tolloid-like metalloproteinase.

It localises to the secreted. In terms of biological role, acts specifically as a negative regulator of skeletal muscle growth. In Rattus norvegicus (Rat), this protein is Growth/differentiation factor 8 (Mstn).